The primary structure comprises 88 residues: Small ribosomal subunit protein bS20 (88 aa).

Belongs to the bacterial ribosomal protein bS20 family.

Binds directly to 16S ribosomal RNA. This is Small ribosomal subunit protein bS20 from Methylorubrum populi (strain ATCC BAA-705 / NCIMB 13946 / BJ001) (Methylobacterium populi).